The primary structure comprises 118 residues: Large ribosomal subunit protein bL20 (118 aa).

This sequence belongs to the bacterial ribosomal protein bL20 family.

Binds directly to 23S ribosomal RNA and is necessary for the in vitro assembly process of the 50S ribosomal subunit. It is not involved in the protein synthesizing functions of that subunit. This Ralstonia nicotianae (strain ATCC BAA-1114 / GMI1000) (Ralstonia solanacearum) protein is Large ribosomal subunit protein bL20.